A 172-amino-acid chain; its full sequence is Centrin-2 (172 aa).

The segment at 1-31 (MASNFKKANMASTTQRKRMSPKPELTEEQKQ) is disordered. Ala-2 carries the N-acetylalanine modification. Residues 2 to 25 (ASNFKKANMASTTQRKRMSPKPEL) form a required for self-assembly region. Ser-20 is modified (phosphoserine). Lys-22 participates in a covalent cross-link: Glycyl lysine isopeptide (Lys-Gly) (interchain with G-Cter in SUMO2). Position 26 is a phosphothreonine (Thr-26). EF-hand domains are found at residues 28-63 (EQKQEIREAFDLFDADGTGTIDVKELKVAMRALGFE), 64-99 (PKKEEIKKMISEIDKEGTGKMNFSDFLTVMTQKMSE), 101-136 (DTKEEILKAFKLFDDDETGKISFKNLKRVAKELGEN), and 137-172 (LSDEELQEMIDEADRDGDGEVNEQEFLRIMKKTSLY). Asp-41, Asp-43, Thr-45, Thr-47, and Glu-52 together coordinate Ca(2+). The Ca(2+) site is built by Asp-150, Asp-152, Asp-154, Glu-156, and Glu-161.

It belongs to the centrin family. As to quaternary structure, monomer. Homooligomer. Interacts with CCP110, SFI1. Component of the XPC complex composed of XPC, RAD23B and CETN2. Component of the nuclear pore complex (NPC)-associated TREX-2 complex (transcription and export complex 2), composed of at least GANP, 2 copies of ENY2, PCID2, SEM1/DSS1, and either centrin CETN2 or centrin CETN3. The TREX-2 complex also associates with ALYREF/ALY and with the nucleoporin NUP153. Interacts with USP49. Forms a microtubule-associated complex with POC5, POC1B and FAM161A. Interacts with CCDC15.

Its subcellular location is the cytoplasm. It is found in the cytoskeleton. The protein localises to the microtubule organizing center. It localises to the centrosome. The protein resides in the centriole. Its subcellular location is the nucleus. It is found in the nucleus envelope. The protein localises to the nuclear pore complex. Functionally, plays a fundamental role in microtubule organizing center structure and function. Required for centriole duplication and correct spindle formation. Has a role in regulating cytokinesis and genome stability via cooperation with CALM1 and CCP110. In terms of biological role, involved in global genome nucleotide excision repair (GG-NER) by acting as component of the XPC complex. Cooperatively with RAD23B appears to stabilize XPC. In vitro, stimulates DNA binding of the XPC:RAD23B dimer. Its function is as follows. The XPC complex is proposed to represent the first factor bound at the sites of DNA damage and together with other core recognition factors, XPA, RPA and the TFIIH complex, is part of the pre-incision (or initial recognition) complex. The XPC complex recognizes a wide spectrum of damaged DNA characterized by distortions of the DNA helix such as single-stranded loops, mismatched bubbles or single-stranded overhangs. The orientation of XPC complex binding appears to be crucial for inducing a productive NER. XPC complex is proposed to recognize and to interact with unpaired bases on the undamaged DNA strand which is followed by recruitment of the TFIIH complex and subsequent scanning for lesions in the opposite strand in a 5'-to-3' direction by the NER machinery. Cyclobutane pyrimidine dimers (CPDs) which are formed upon UV-induced DNA damage esacpe detection by the XPC complex due to a low degree of structural perurbation. Instead they are detected by the UV-DDB complex which in turn recruits and cooperates with the XPC complex in the respective DNA repair. As a component of the TREX-2 complex, involved in the export of mRNAs to the cytoplasm through the nuclear pores. The polypeptide is Centrin-2 (CETN2) (Bos taurus (Bovine)).